Here is a 231-residue protein sequence, read N- to C-terminus: RNA pyrophosphohydrolase (231 aa).

The 144-residue stretch at 6 to 149 folds into the Nudix hydrolase domain; the sequence is GFRPNVGIIL…KRDVYQLALT (144 aa). The Nudix box signature appears at 38-59; it reads GGIKYGETPVQAMYRELHEETG. The interval 157–190 is disordered; sequence RPQPRTERPGGHHHGQRYPRMASSVNAPPGASMA.

It belongs to the Nudix hydrolase family. RppH subfamily. Requires a divalent metal cation as cofactor.

Its function is as follows. Accelerates the degradation of transcripts by removing pyrophosphate from the 5'-end of triphosphorylated RNA, leading to a more labile monophosphorylated state that can stimulate subsequent ribonuclease cleavage. The protein is RNA pyrophosphohydrolase of Paraburkholderia phymatum (strain DSM 17167 / CIP 108236 / LMG 21445 / STM815) (Burkholderia phymatum).